The following is a 160-amino-acid chain: MIDLGVSKIALIGAVALIVIGPEKLPRVARTVGTLLGKAQRYVADVKQEVNRSMELDELKKMKDTVEGAARDVETSIQTSASDFEKSWSDATGSDASTATDELPGMVVFPEYKHPKKNWRLKTGATPQWYKARSGVRTKAQSGAARVARFRPQSGRSSSF.

Residues 1–21 form a helical membrane-spanning segment; it reads MIDLGVSKIALIGAVALIVIG. Disordered regions lie at residues 70 to 100 and 133 to 160; these read ARDV…STAT and RSGV…SSSF. Residues 89–100 are compositionally biased toward polar residues; it reads SDATGSDASTAT.

It belongs to the TatB family. The Tat system comprises two distinct complexes: a TatABC complex, containing multiple copies of TatA, TatB and TatC subunits, and a separate TatA complex, containing only TatA subunits. Substrates initially bind to the TatABC complex, which probably triggers association of the separate TatA complex to form the active translocon.

It is found in the cell inner membrane. Its function is as follows. Part of the twin-arginine translocation (Tat) system that transports large folded proteins containing a characteristic twin-arginine motif in their signal peptide across membranes. Together with TatC, TatB is part of a receptor directly interacting with Tat signal peptides. TatB may form an oligomeric binding site that transiently accommodates folded Tat precursor proteins before their translocation. This Polaromonas sp. (strain JS666 / ATCC BAA-500) protein is Sec-independent protein translocase protein TatB.